The following is a 1180-amino-acid chain: DNA-directed RNA polymerase subunit beta (1180 aa).

This sequence belongs to the RNA polymerase beta chain family. In terms of assembly, the RNAP catalytic core consists of 2 alpha, 1 beta, 1 beta' and 1 omega subunit. When a sigma factor is associated with the core the holoenzyme is formed, which can initiate transcription.

It catalyses the reaction RNA(n) + a ribonucleoside 5'-triphosphate = RNA(n+1) + diphosphate. Functionally, DNA-dependent RNA polymerase catalyzes the transcription of DNA into RNA using the four ribonucleoside triphosphates as substrates. The chain is DNA-directed RNA polymerase subunit beta from Macrococcus caseolyticus (strain JCSC5402) (Macrococcoides caseolyticum).